We begin with the raw amino-acid sequence, 322 residues long: Large ribosomal subunit protein uL29m (322 aa).

The tract at residues M1 to N44 is disordered.

It belongs to the universal ribosomal protein uL29 family. Component of the mitochondrial large ribosomal subunit. Mature mitochondrial ribosomes consist of a small (37S) and a large (54S) subunit. The 37S subunit contains at least 33 different proteins and 1 molecule of RNA (15S). The 54S subunit contains at least 45 different proteins and 1 molecule of RNA (21S).

It localises to the mitochondrion. This chain is Large ribosomal subunit protein uL29m (MRPL4), found in Vanderwaltozyma polyspora (strain ATCC 22028 / DSM 70294 / BCRC 21397 / CBS 2163 / NBRC 10782 / NRRL Y-8283 / UCD 57-17) (Kluyveromyces polysporus).